Consider the following 53-residue polypeptide: uncharacterized protein (53 aa).

Belongs to the ELIP/psbS family.

It localises to the plastid. The protein resides in the chloroplast. Its function is as follows. Possible role in chlorophyll and/or carotenoid binding. This is an uncharacterized protein from Guillardia theta (Cryptophyte).